Consider the following 498-residue polypeptide: Lysine--tRNA ligase (498 aa).

Residues Glu409 and Glu416 each coordinate Mg(2+).

This sequence belongs to the class-II aminoacyl-tRNA synthetase family. As to quaternary structure, homodimer. Mg(2+) is required as a cofactor.

The protein resides in the cytoplasm. It carries out the reaction tRNA(Lys) + L-lysine + ATP = L-lysyl-tRNA(Lys) + AMP + diphosphate. The chain is Lysine--tRNA ligase from Dichelobacter nodosus (strain VCS1703A).